The primary structure comprises 214 residues: Thymidylate kinase (214 aa).

10–17 (GGEGAGKS) is an ATP binding site.

The protein belongs to the thymidylate kinase family.

It carries out the reaction dTMP + ATP = dTDP + ADP. In terms of biological role, phosphorylation of dTMP to form dTDP in both de novo and salvage pathways of dTTP synthesis. In Brucella suis (strain ATCC 23445 / NCTC 10510), this protein is Thymidylate kinase.